The chain runs to 266 residues: uncharacterized protein (266 aa).

A signal peptide spans 1–22 (MRYLKKLAWFISVIILGIFIIG). Cys23 carries the N-palmitoyl cysteine lipid modification. Cys23 carries the S-diacylglycerol cysteine lipid modification.

It belongs to the staphylococcal tandem lipoprotein family.

It localises to the cell membrane. This is an uncharacterized protein from Staphylococcus aureus (strain USA300).